A 268-amino-acid chain; its full sequence is Hydroxyethylthiazole kinase 2 (268 aa).

Position 42 (M42) interacts with substrate. The ATP site is built by K117 and T167. G194 is a substrate binding site.

The protein belongs to the Thz kinase family. Mg(2+) serves as cofactor.

The enzyme catalyses 5-(2-hydroxyethyl)-4-methylthiazole + ATP = 4-methyl-5-(2-phosphooxyethyl)-thiazole + ADP + H(+). It participates in cofactor biosynthesis; thiamine diphosphate biosynthesis; 4-methyl-5-(2-phosphoethyl)-thiazole from 5-(2-hydroxyethyl)-4-methylthiazole: step 1/1. In terms of biological role, catalyzes the phosphorylation of the hydroxyl group of 4-methyl-5-beta-hydroxyethylthiazole (THZ). The chain is Hydroxyethylthiazole kinase 2 from Streptococcus pneumoniae (strain CGSP14).